We begin with the raw amino-acid sequence, 260 residues long: 2-amino-3,7-dideoxy-D-threo-hept-6-ulosonate synthase 1 (260 aa).

Asp-26 acts as the Proton acceptor in catalysis. Residues 26 to 30 and 144 to 146 contribute to the 1-deoxy-D-threo-hexo-2,5-diulose 6-phosphate site; these read DHGIT and YPR. The active-site Proton donor is Tyr-144. Lys-172 serves as the catalytic Schiff-base intermediate with substrate. Residues 194–195 and 221–222 each bind 1-deoxy-D-threo-hexo-2,5-diulose 6-phosphate; these read GG and GR.

The protein belongs to the DeoC/FbaB aldolase family. ADHS subfamily. Homodecamer.

The catalysed reaction is 1-deoxy-D-threo-hexo-2,5-diulose 6-phosphate + L-aspartate 4-semialdehyde = 2,3-dioxopropyl phosphate + 2-amino-2,3,7-trideoxy-D-lyxo-hept-6-ulosonate. In terms of biological role, catalyzes a transaldol reaction between 6-deoxy-5-ketofructose 1-phosphate (DKFP) and L-aspartate semialdehyde (ASA) with an elimination of hydroxypyruvaldehyde phosphate to yield 2-amino-3,7-dideoxy-D-threo-hept-6-ulosonate (ADH). Plays a key role in an alternative pathway of the biosynthesis of 3-dehydroquinate (DHQ), which is involved in the canonical pathway for the biosynthesis of aromatic amino acids. This chain is 2-amino-3,7-dideoxy-D-threo-hept-6-ulosonate synthase 1, found in Archaeoglobus fulgidus (strain ATCC 49558 / DSM 4304 / JCM 9628 / NBRC 100126 / VC-16).